Here is a 561-residue protein sequence, read N- to C-terminus: NADH-quinone oxidoreductase subunit C/D (561 aa).

Positions 1–152 (MLEKFSSKFN…YQVLYESDDL (152 aa)) are NADH dehydrogenase I subunit C. An NADH dehydrogenase I subunit D region spans residues 176–561 (KYTFLNIGPS…LNIIAGELDR (386 aa)).

The protein in the N-terminal section; belongs to the complex I 30 kDa subunit family. It in the C-terminal section; belongs to the complex I 49 kDa subunit family. NDH-1 is composed of 13 different subunits. Subunits NuoB, CD, E, F, and G constitute the peripheral sector of the complex.

It is found in the cell inner membrane. The catalysed reaction is a quinone + NADH + 5 H(+)(in) = a quinol + NAD(+) + 4 H(+)(out). NDH-1 shuttles electrons from NADH, via FMN and iron-sulfur (Fe-S) centers, to quinones in the respiratory chain. The immediate electron acceptor for the enzyme in this species is believed to be ubiquinone. Couples the redox reaction to proton translocation (for every two electrons transferred, four hydrogen ions are translocated across the cytoplasmic membrane), and thus conserves the redox energy in a proton gradient. The protein is NADH-quinone oxidoreductase subunit C/D of Campylobacter fetus subsp. fetus (strain 82-40).